The following is a 302-amino-acid chain: Protein FdhE homolog (302 aa).

It belongs to the FdhE family.

It is found in the cytoplasm. Its function is as follows. Necessary for formate dehydrogenase activity. This is Protein FdhE homolog from Shewanella oneidensis (strain ATCC 700550 / JCM 31522 / CIP 106686 / LMG 19005 / NCIMB 14063 / MR-1).